The following is a 344-amino-acid chain: Phenylalanine--tRNA ligase alpha subunit (344 aa).

Glu261 provides a ligand contact to Mg(2+).

This sequence belongs to the class-II aminoacyl-tRNA synthetase family. Phe-tRNA synthetase alpha subunit type 1 subfamily. In terms of assembly, tetramer of two alpha and two beta subunits. Mg(2+) is required as a cofactor.

The protein localises to the cytoplasm. It catalyses the reaction tRNA(Phe) + L-phenylalanine + ATP = L-phenylalanyl-tRNA(Phe) + AMP + diphosphate + H(+). The polypeptide is Phenylalanine--tRNA ligase alpha subunit (Ehrlichia ruminantium (strain Gardel)).